We begin with the raw amino-acid sequence, 313 residues long: Short-chain dehydrogenase/reductase family 9C member 7 (313 aa).

Position 29–53 (29–53 (FITGCDSGFGNLLAKQLVDRGMQVL)) interacts with NADP(+). Position 160 (Ser-160) interacts with substrate. The active-site Proton acceptor is the Tyr-172. Ser-185 carries the phosphoserine modification.

It belongs to the short-chain dehydrogenases/reductases (SDR) family. As to expression, expressed in the skin. Expressed in granular and cornified layers of the epidermis (at protein level). Highly expressed in liver.

It localises to the cytoplasm. The enzyme catalyses a N-[omega-(9R,10R)-epoxy-(13R)-hydroxy-(11E)-octadecenoyloxy]acyl-beta-D-glucosyl-(1&lt;-&gt;1)-sphing-4E-enine + NAD(+) = a N-[omega-(9R,10R)-epoxy-13-oxo-(11E)-octadecenoyloxy]acyl-beta-D-glucosyl-(1&lt;-&gt;1)-sphing-4E-enine + NADH + H(+). It catalyses the reaction a N-[omega-(9R,10R)-epoxy-(13R)-hydroxy-(11E)-octadecenoyloxy]-acylsphing-4E-enine + NAD(+) = a N-[omega-(9R,10R)-epoxy-13-oxo-(11E)-octadecenoyloxy]-acylsphing-4E-enine + NADH + H(+). Functionally, plays a crucial role in the formation of the epidermal permeability barrier. Catalyzes the NAD+-dependent dehydrogenation of the linoleate 9,10-trans-epoxy-11E-13-alcohol esterified in omega-O-acylceramides (such as in N-[omega-(9R,10R)-epoxy-(13R)-hydroxy-(11E)-octadecenoyloxy]-acylsphing-4E-enine) to the corresponding 13-ketone, the reactive moiety required for binding of epidermal ceramides to proteins. Displays weak conversion of all-trans-retinal to all-trans-retinol in the presence of NADH. Has apparently no steroid dehydrogenase activity. This is Short-chain dehydrogenase/reductase family 9C member 7 (SDR9C7) from Homo sapiens (Human).